The primary structure comprises 275 residues: Large ribosomal subunit protein uL2 (275 aa).

The segment at 223–275 (VAMNPVDHPHGGGEGRTSGGRHPVSPWGQPTKGYKTRSNKRTDKYIVRRRNKK) is disordered.

It belongs to the universal ribosomal protein uL2 family. As to quaternary structure, part of the 50S ribosomal subunit. Forms a bridge to the 30S subunit in the 70S ribosome.

In terms of biological role, one of the primary rRNA binding proteins. Required for association of the 30S and 50S subunits to form the 70S ribosome, for tRNA binding and peptide bond formation. It has been suggested to have peptidyltransferase activity; this is somewhat controversial. Makes several contacts with the 16S rRNA in the 70S ribosome. The polypeptide is Large ribosomal subunit protein uL2 (Shewanella pealeana (strain ATCC 700345 / ANG-SQ1)).